Here is a 122-residue protein sequence, read N- to C-terminus: UPF0102 protein VV1_0590 (122 aa).

This sequence belongs to the UPF0102 family.

The protein is UPF0102 protein VV1_0590 of Vibrio vulnificus (strain CMCP6).